We begin with the raw amino-acid sequence, 101 residues long: Parathymosin (101 aa).

The segment at 1–101 (MSEKSVEAAA…RQKTENGASA (101 aa)) is disordered. An N-acetylserine modification is found at serine 2. Residue serine 2 is modified to Phosphoserine. N6-acetyllysine is present on lysine 4. Residues serine 5 and serine 13 each carry the phosphoserine modification. Basic and acidic residues predominate over residues 13–37 (SAKDLKEKKDKVEEKAGRKERKKEV). Lysine 15 is subject to N6-acetyllysine. The span at 38–74 (VEEEENGAEEEEEETAEDGEDDDEGDEEDEEEEEEDE) shows a compositional bias: acidic residues. A Phosphothreonine modification is found at threonine 52. The residue at position 91 (lysine 91) is an N6-acetyllysine.

It belongs to the pro/parathymosin family.

Its function is as follows. Parathymosin may mediate immune function by blocking the effect of prothymosin alpha which confers resistance to certain opportunistic infections. The protein is Parathymosin (Ptms) of Mus musculus (Mouse).